The primary structure comprises 247 residues: ATP synthase subunit a, chloroplastic (247 aa).

The next 5 helical transmembrane spans lie at 38-58 (QVLITSWFVITILLGSVIIAV), 95-115 (VPFIGTMFLFIFVSNWSGALL), 134-154 (INTTVALALLTSAAYFYAGLS), 199-219 (LVVVVLVSLVPLVVPIPVMFL), and 220-240 (GLFTSGIQALIFATLAAAYIG).

Belongs to the ATPase A chain family. As to quaternary structure, F-type ATPases have 2 components, CF(1) - the catalytic core - and CF(0) - the membrane proton channel. CF(1) has five subunits: alpha(3), beta(3), gamma(1), delta(1), epsilon(1). CF(0) has four main subunits: a, b, b' and c.

Its subcellular location is the plastid. It is found in the chloroplast thylakoid membrane. In terms of biological role, key component of the proton channel; it plays a direct role in the translocation of protons across the membrane. The sequence is that of ATP synthase subunit a, chloroplastic from Sorghum bicolor (Sorghum).